The primary structure comprises 319 residues: Tyrosine phosphatase-like protein N3 (319 aa).

Residues 7 to 285 form the Tyrosine-protein phosphatase domain; it reads SNLSIHEFWR…LIINKILLHS (279 aa).

This sequence belongs to the protein-tyrosine phosphatase family.

This is Tyrosine phosphatase-like protein N3 (N7) from Microplitis demolitor bracovirus (isolate Webb) (MdBV).